The chain runs to 799 residues: Protein translocase subunit SecA (799 aa).

Residues Gln85, 103–107, and Asp504 each bind ATP; that span reads GEGKT.

This sequence belongs to the SecA family. Monomer and homodimer. Part of the essential Sec protein translocation apparatus which comprises SecA, SecYEG and auxiliary proteins SecDF. Other proteins may also be involved.

The protein resides in the cell membrane. It is found in the cytoplasm. The enzyme catalyses ATP + H2O + cellular proteinSide 1 = ADP + phosphate + cellular proteinSide 2.. Its function is as follows. Part of the Sec protein translocase complex. Interacts with the SecYEG preprotein conducting channel. Has a central role in coupling the hydrolysis of ATP to the transfer of proteins into and across the cell membrane, serving as an ATP-driven molecular motor driving the stepwise translocation of polypeptide chains across the membrane. The sequence is that of Protein translocase subunit SecA from Lactobacillus acidophilus (strain ATCC 700396 / NCK56 / N2 / NCFM).